The following is a 502-amino-acid chain: Capsid protein (502 aa).

Disordered regions lie at residues 369–392 (ISELPIASPPQNPHKYTVRPSDYD) and 405–487 (LTDS…TRKQ). Basic residues predominate over residues 447 to 456 (SRRRKRRRRS).

This sequence belongs to the anelloviridae capsid protein family.

It is found in the virion. In terms of biological role, self-assembles to form an icosahedral capsid with a T=1 symmetry, about 30 nm in diameter, and consisting of 60 capsid proteins. The capsid encapsulates the genomic DNA. Capsid protein is involved in attachment and entry into the host cell. The protein is Capsid protein of Tupaia.